The primary structure comprises 146 residues: MDVKILDARLRDQLPHYATPGAAGLDLRACIDAPITLAPGETRLVPTGMAIHLADPGYAALILPRSGLGHKHGIVLGNLVGLIDSDYQGQLMVSAWNRSEQSFELVPLERLAQLVIVPVVQARFNIVEAFETTARGEGGFGSTGRQ.

Substrate is bound by residues 65–67 (RSG), asparagine 78, 82–84 (LID), and methionine 92.

The protein belongs to the dUTPase family. It depends on Mg(2+) as a cofactor.

It catalyses the reaction dUTP + H2O = dUMP + diphosphate + H(+). Its pathway is pyrimidine metabolism; dUMP biosynthesis; dUMP from dCTP (dUTP route): step 2/2. This enzyme is involved in nucleotide metabolism: it produces dUMP, the immediate precursor of thymidine nucleotides and it decreases the intracellular concentration of dUTP so that uracil cannot be incorporated into DNA. The protein is Deoxyuridine 5'-triphosphate nucleotidohydrolase of Thiobacillus denitrificans (strain ATCC 25259 / T1).